A 424-amino-acid polypeptide reads, in one-letter code: Histone-binding protein RBBP7 (424 aa).

WD repeat units follow at residues 47–121 (QWLP…KINH), 127–172 (RARY…LRLR), 180–216 (GLSW…KIVD), 227–268 (VVED…HSVD), 274–311 (VNCL…LHSF), 317–368 (EIFQ…LFIH), and 375–402 (ISDF…IWQM). Residues 359 to 404 (DGPPELLFIHGGHTAKISDFSWNPNEPWVICSVSEDNIMQIWQMAE) are interaction with HAT1.

The protein belongs to the WD repeat RBAP46/RBAP48/MSI1 family. In terms of assembly, binds directly to helix 1 of the histone fold of histone H4, a region that is not accessible when H4 is in chromatin. Also interacts with histone H2B and HAT1.

The protein resides in the nucleus. Core histone-binding subunit that may target chromatin remodeling factors, histone acetyltransferases and histone deacetylases to their histone substrates in a manner that is regulated by nucleosomal DNA. Component of several complexes which regulate chromatin metabolism. The sequence is that of Histone-binding protein RBBP7 (RBBP7) from Gallus gallus (Chicken).